Here is a 524-residue protein sequence, read N- to C-terminus: Tissue-resident T-cell transcription regulator protein ZNF683 (524 aa).

Basic and acidic residues predominate over residues 130 to 142 (NKDKLGKQPERAG). Disordered stretches follow at residues 130–166 (NKDK…NRKS) and 265–303 (QALP…LSSQ). C2H2-type zinc fingers lie at residues 322–344 (YECN…LRVH) and 350–372 (FQCA…HLVH). The C2H2-type 3; degenerate zinc-finger motif lies at 398–420 (REREVCHKRFSSSSNLKTHLRLH). The segment at 426–448 (FQCSVCRSRFTQHIHLKLHHRLH) adopts a C2H2-type 4 zinc-finger fold.

It belongs to the krueppel C2H2-type zinc-finger protein family. As to expression, expressed in terminally differentiated effector CD8(+) T-cells, but not in naive and central memory cells. Expressed in terminally differentiated natural killer (NK) cells and natural killer (NKT) T-cells (at protein level). Expressed strongly in effector-type CD8(+) T-cells and weakly in naive and memory CD8(+) T-cells. Expressed in terminally differentiated natural killer (NK) cells. Isoform 2 is strongly expressed in effector CD8(+) T and natural killer (NK) cells. Isoform 1 is expressed in effector CD8(+) T and natural killer (NK) cells. (Microbial infection) Expressed in cytomegalovirus (CMV)-infected effector CD8(+) T-cells (at protein level).

It is found in the nucleus. Functionally, transcription factor that mediates a transcriptional program in various innate and adaptive immune tissue-resident lymphocyte T-cell types such as tissue-resident memory T (Trm), natural killer (trNK) and natural killer T (NKT) cells and negatively regulates gene expression of proteins that promote the egress of tissue-resident T-cell populations from non-lymphoid organs. Plays a role in the development, retention and long-term establishment of adaptive and innate tissue-resident lymphocyte T cell types in non-lymphoid organs, such as the skin and gut, but also in other nonbarrier tissues like liver and kidney, and therefore may provide immediate immunological protection against reactivating infections or viral reinfection. Also plays a role in the differentiation of both thymic and peripheral NKT cells. Negatively regulates the accumulation of interferon-gamma (IFN-gamma) in NKT cells at steady state or after antigenic stimulation. Positively regulates granzyme B production in NKT cells after innate stimulation. Associates with the transcriptional repressor PRDM1/BLIMP1 to chromatin at gene promoter regions. Its function is as follows. Lacks transcriptional repressor activity. Binds to DNA within promoter regions of the transcriptional repressor PRDM1/BLIMP1 target sites. Unable to regulate interferon-gamma (IFN-gamma) production in cytomegalovirus (CMV)-infected effector CD8(+) T-cells. In terms of biological role, transcriptional repressor that binds to DNA within promoter regions of the transcriptional repressor PRDM1/BLIMP1 target sites. Regulates interferon-gamma (IFN-gamma) production in cytomegalovirus (CMV)-infected effector CD8(+) T cells. In Homo sapiens (Human), this protein is Tissue-resident T-cell transcription regulator protein ZNF683.